A 146-amino-acid chain; its full sequence is Large ribosomal subunit protein uL13 (146 aa).

Positions alanine 126–glycine 146 are disordered.

This sequence belongs to the universal ribosomal protein uL13 family. Part of the 50S ribosomal subunit.

Its function is as follows. This protein is one of the early assembly proteins of the 50S ribosomal subunit, although it is not seen to bind rRNA by itself. It is important during the early stages of 50S assembly. The sequence is that of Large ribosomal subunit protein uL13 from Roseiflexus castenholzii (strain DSM 13941 / HLO8).